We begin with the raw amino-acid sequence, 137 residues long: Protein MGF 110-7L (137 aa).

The first 20 residues, 1 to 20 (MLVIILGIIGLLASSNLVSS), serve as a signal peptide directing secretion. Asparagine 69, asparagine 70, and asparagine 105 each carry an N-linked (GlcNAc...) asparagine; by host glycan.

The protein belongs to the asfivirus MGF 110 family.

Functionally, plays a role in virus cell tropism, and may be required for efficient virus replication in macrophages. This chain is Protein MGF 110-7L, found in African swine fever virus (isolate Tick/South Africa/Pretoriuskop Pr4/1996) (ASFV).